The chain runs to 293 residues: Triosephosphate isomerase (293 aa).

25 to 27 contacts substrate; sequence NWK. Residue H117 is the Electrophile of the active site. The active-site Proton acceptor is the E218.

It belongs to the triosephosphate isomerase family. As to quaternary structure, homodimer.

The protein localises to the cytoplasm. It catalyses the reaction D-glyceraldehyde 3-phosphate = dihydroxyacetone phosphate. It functions in the pathway carbohydrate biosynthesis; gluconeogenesis. It participates in carbohydrate degradation; glycolysis; D-glyceraldehyde 3-phosphate from glycerone phosphate: step 1/1. In terms of biological role, involved in the gluconeogenesis. Catalyzes stereospecifically the conversion of dihydroxyacetone phosphate (DHAP) to D-glyceraldehyde-3-phosphate (G3P). The protein is Triosephosphate isomerase of Tropheryma whipplei (strain Twist) (Whipple's bacillus).